The primary structure comprises 282 residues: Formamidopyrimidine-DNA glycosylase (282 aa).

Proline 2 serves as the catalytic Schiff-base intermediate with DNA. Glutamate 3 acts as the Proton donor in catalysis. Catalysis depends on lysine 58, which acts as the Proton donor; for beta-elimination activity. DNA-binding residues include histidine 96, arginine 115, and lysine 152. Residues 238 to 272 (HVYGRGGQPCERCGEEILKTVLGGRGTHYCPSCQN) form an FPG-type zinc finger. Arginine 262 acts as the Proton donor; for delta-elimination activity in catalysis.

It belongs to the FPG family. In terms of assembly, monomer. The cofactor is Zn(2+).

It carries out the reaction Hydrolysis of DNA containing ring-opened 7-methylguanine residues, releasing 2,6-diamino-4-hydroxy-5-(N-methyl)formamidopyrimidine.. The enzyme catalyses 2'-deoxyribonucleotide-(2'-deoxyribose 5'-phosphate)-2'-deoxyribonucleotide-DNA = a 3'-end 2'-deoxyribonucleotide-(2,3-dehydro-2,3-deoxyribose 5'-phosphate)-DNA + a 5'-end 5'-phospho-2'-deoxyribonucleoside-DNA + H(+). Functionally, involved in base excision repair of DNA damaged by oxidation or by mutagenic agents. Acts as a DNA glycosylase that recognizes and removes damaged bases. Has a preference for oxidized purines, such as 7,8-dihydro-8-oxoguanine (8-oxoG). Has AP (apurinic/apyrimidinic) lyase activity and introduces nicks in the DNA strand. Cleaves the DNA backbone by beta-delta elimination to generate a single-strand break at the site of the removed base with both 3'- and 5'-phosphates. In Corynebacterium aurimucosum (strain ATCC 700975 / DSM 44827 / CIP 107346 / CN-1) (Corynebacterium nigricans), this protein is Formamidopyrimidine-DNA glycosylase.